We begin with the raw amino-acid sequence, 241 residues long: tRNA (guanine-N(7)-)-methyltransferase (241 aa).

A compositionally biased stretch (polar residues) spans 1-10 (MTESNDTPIQ). The tract at residues 1-20 (MTESNDTPIQTEEGDERQHR) is disordered. Residues Glu-71, Glu-96, Asp-123, and Asp-146 each contribute to the S-adenosyl-L-methionine site. The active site involves Asp-146. Substrate is bound by residues Lys-150, Asp-182, and 219–222 (TKFE).

Belongs to the class I-like SAM-binding methyltransferase superfamily. TrmB family.

It carries out the reaction guanosine(46) in tRNA + S-adenosyl-L-methionine = N(7)-methylguanosine(46) in tRNA + S-adenosyl-L-homocysteine. The protein operates within tRNA modification; N(7)-methylguanine-tRNA biosynthesis. Its function is as follows. Catalyzes the formation of N(7)-methylguanine at position 46 (m7G46) in tRNA. This chain is tRNA (guanine-N(7)-)-methyltransferase, found in Pseudomonas fluorescens (strain Pf0-1).